The following is a 236-amino-acid chain: Thrombin-like enzyme kangshuanmei (236 aa).

A Peptidase S1 domain is found at 1-227 (VIGGDECNIN…HLDWIQSIIA (227 aa)). Cystine bridges form between C7–C141, C28–C44, C78–C234, C120–C188, C152–C167, and C178–C203. The active-site Charge relay system is H43. N81 is a glycosylation site (N-linked (GlcNAc...) asparagine). D88 (charge relay system) is an active-site residue. N-linked (GlcNAc...) asparagine glycosylation is found at N99 and N148. Catalysis depends on S182, which acts as the Charge relay system. N-linked (GlcNAc...) asparagine glycosylation occurs at N229.

This sequence belongs to the peptidase S1 family. Snake venom subfamily. In terms of assembly, monomer. Post-translationally, N-glycosylated by units composed of Fuc, Man, GlcNAc, Gal and NeuAC residues. Expressed by the venom gland.

The protein resides in the secreted. Its activity is regulated as follows. Inhibited by 4-(2-aminoethyl)-benzensulfonyl fluoride. Not inhibited by antithrombin-III. Thrombin-like snake venom serine protease. Cleaves bonds after Arg and Lys, converts fibrinogen (FGA and FGB) to fibrin and releases both fibrinopeptides A and B, and fibrinogen peptide Bbeta1-42. Has a blood clotting activity. The chain is Thrombin-like enzyme kangshuanmei from Gloydius brevicauda (Korean slamosa snake).